We begin with the raw amino-acid sequence, 295 residues long: Probable adenylate kinase 6, chloroplastic (295 aa).

The N-terminal 46 residues, 1 to 46, are a transit peptide targeting the chloroplast; sequence MAVSHRLLRPATTTIKNTFSSLFIRSLSSSSSGSSLDPKIDLEEAA. Residue 74 to 79 coordinates ATP; that stretch reads GVGKGT. Residues 94–123 form an NMP region; that stretch reads ATGDLVREELSSSGLLSSQLKELVNHGKLV. AMP-binding positions include Thr95, Arg100, 121 to 123, 151 to 154, and Gln158; these read KLV and GFPR. Residues 187–235 are LID; sequence GRRICSECGGNYNVACIDIKGDDDTPRMYMPPLLPPPNCESKLISRADD. Arg188 lines the ATP pocket. Arg243 lines the AMP pocket. ATP is bound at residue Gly271.

It belongs to the adenylate kinase family. As to quaternary structure, monomer.

It is found in the plastid. It localises to the chloroplast. The catalysed reaction is AMP + ATP = 2 ADP. In terms of biological role, catalyzes the reversible transfer of the terminal phosphate group between ATP and AMP. Plays an important role in cellular energy homeostasis and in adenine nucleotide metabolism. The sequence is that of Probable adenylate kinase 6, chloroplastic from Arabidopsis thaliana (Mouse-ear cress).